A 1383-amino-acid polypeptide reads, in one-letter code: Cell surface hyaluronidase CEMIP2 (1383 aa).

Positions 1 to 50 are disordered; sequence MYATDSRGHSPAFLQPQNGNSRHPSGYVPGKVVPLRPPPPPKSQASAKFT. The Cytoplasmic portion of the chain corresponds to 1-82; the sequence is MYATDSRGHS…SQKQKRHKNT (82 aa). S10 and S63 each carry phosphoserine. The chain crosses the membrane as a helical; Signal-anchor for type II membrane protein span at residues 83–103; sequence FICFAITSFSFFIALAIILGI. Over 104–1383 the chain is Extracellular; that stretch reads SSKYAPDENC…ELLKQASKAH (1280 aa). Positions 121–245 constitute a G8 domain; the sequence is RNWDPGQDSA…RKASWTLLAR (125 aa). Residues N248 and N292 are each glycosylated (N-linked (GlcNAc...) asparagine). In terms of domain architecture, GG-type lectin 1 spans 255–412; the sequence is GSYTFEKDFS…VSLSGFRVEV (158 aa). PbH1 repeat units lie at residues 669-691, 711-733, and 791-812; these read HPNNNLINNAAAGSQDAGIWYLF, TPLGIFYNNRVHSNFKAGLFIDK, and GGDIIVQNSAFADNGIGLTFAS. N914 and N1234 each carry an N-linked (GlcNAc...) asparagine glycan. The GG-type lectin 2 domain maps to 1208 to 1366; the sequence is KSYLPVQFQS…LDEYGCPRAT (159 aa).

It belongs to the CEMIP family. In terms of tissue distribution, widely expressed.

Its subcellular location is the cell membrane. It carries out the reaction Random hydrolysis of (1-&gt;4)-linkages between N-acetyl-beta-D-glucosamine and D-glucuronate residues in hyaluronate.. Its function is as follows. Cell surface hyaluronidase that mediates the initial cleavage of extracellular high-molecular-weight hyaluronan into intermediate-size hyaluronan of approximately 10-5 kDa fragments. Very specific to hyaluronan; not able to cleave chondroitin sulfate or dermatan sulfate. Has an essential function in systemic hyaluronan catabolism and turnover and regulates cell adhesion and migration via hyaluronan degradation at focal adhesion sites. Acts as a regulator of angiogenesis and heart morphogenesis by mediating degradation of extracellular hyaluronan, thereby regulating VEGF signaling. This Homo sapiens (Human) protein is Cell surface hyaluronidase CEMIP2.